The chain runs to 270 residues: Protoheme IX farnesyltransferase (270 aa).

Transmembrane regions (helical) follow at residues 13 to 30 (LALL…LVPD), 33 to 53 (HATL…GSAL), 95 to 115 (LLVL…ALAW), 129 to 149 (LALA…WTLA), 156 to 176 (YRII…FWLF), 207 to 227 (LWLG…LMAP), and 249 to 269 (EATL…ALLL).

Belongs to the UbiA prenyltransferase family. Protoheme IX farnesyltransferase subfamily.

The protein resides in the cell inner membrane. The enzyme catalyses heme b + (2E,6E)-farnesyl diphosphate + H2O = Fe(II)-heme o + diphosphate. The protein operates within porphyrin-containing compound metabolism; heme O biosynthesis; heme O from protoheme: step 1/1. Converts heme B (protoheme IX) to heme O by substitution of the vinyl group on carbon 2 of heme B porphyrin ring with a hydroxyethyl farnesyl side group. The sequence is that of Protoheme IX farnesyltransferase from Geobacter sulfurreducens (strain ATCC 51573 / DSM 12127 / PCA).